The following is a 93-amino-acid chain: Alpha-elapitoxin-Oh2a (93 aa).

An N-terminal signal peptide occupies residues 1–21 (MKTLLLTLVVVTIVCLDLGYT). Cystine bridges form between cysteine 24–cysteine 43, cysteine 36–cysteine 64, cysteine 49–cysteine 53, cysteine 68–cysteine 79, and cysteine 80–cysteine 85.

It belongs to the three-finger toxin family. Long-chain subfamily. Type II alpha-neurotoxin sub-subfamily. As to expression, expressed by the venom gland.

It localises to the secreted. Binds with high affinity to muscular (alpha-1/CHRNA1) and neuronal (alpha-7/CHRNA7) nicotinic acetylcholine receptor (nAChR) and inhibits acetylcholine from binding to the receptor, thereby impairing neuromuscular and neuronal transmission. This chain is Alpha-elapitoxin-Oh2a, found in Ophiophagus hannah (King cobra).